A 154-amino-acid chain; its full sequence is Ribonuclease 8 (154 aa).

The signal sequence occupies residues methionine 1–alanine 27. Histidine 42 acts as the Proton acceptor in catalysis. 3 cysteine pairs are disulfide-bonded: cysteine 64/cysteine 118, cysteine 82/cysteine 133, and cysteine 89/cysteine 96. Substrate-binding positions include lysine 65–threonine 69 and lysine 90. Histidine 149 (proton donor) is an active-site residue.

This sequence belongs to the pancreatic ribonuclease family.

It localises to the secreted. Functionally, has a low ribonuclease activity. This chain is Ribonuclease 8 (RNASE8), found in Pongo pygmaeus (Bornean orangutan).